Consider the following 361-residue polypeptide: Dihydroorotate dehydrogenase (quinone) (361 aa).

FMN-binding positions include 67-71 (AGLDK) and Thr91. Lys71 serves as a coordination point for substrate. 116 to 120 (NRMGF) contacts substrate. 2 residues coordinate FMN: Asn145 and Asn178. Asn178 provides a ligand contact to substrate. The Nucleophile role is filled by Ser181. Substrate is bound at residue Asn183. The FMN site is built by Lys223 and Gly251. Position 252 to 253 (252 to 253 (NT)) interacts with substrate. FMN-binding positions include Gly273, Gly302, and 323–324 (YT).

It belongs to the dihydroorotate dehydrogenase family. Type 2 subfamily. In terms of assembly, monomer. Requires FMN as cofactor.

It is found in the cell membrane. It carries out the reaction (S)-dihydroorotate + a quinone = orotate + a quinol. The protein operates within pyrimidine metabolism; UMP biosynthesis via de novo pathway; orotate from (S)-dihydroorotate (quinone route): step 1/1. Its function is as follows. Catalyzes the conversion of dihydroorotate to orotate with quinone as electron acceptor. The chain is Dihydroorotate dehydrogenase (quinone) from Deinococcus geothermalis (strain DSM 11300 / CIP 105573 / AG-3a).